The following is a 200-amino-acid chain: CASP-like protein 1U2 (200 aa).

Topologically, residues 1-33 (MAEPVIVVPRKGVYSDDSYHHHHRHHSFHSCTN) are cytoplasmic. A helical transmembrane segment spans residues 34 to 54 (FLLRTLTAGATAAAVVVMLIS). Topologically, residues 55–77 (TQTSGTIYGYFRGRWRDYPAYKW) are extracellular. Residues 78 to 98 (LIIANAVVFVYSVMAAIVACF) form a helical membrane-spanning segment. The Cytoplasmic portion of the chain corresponds to 99 to 120 (SVIARRGPLSYSPSAWLTLLVD). Residues 121 to 141 (FLAASALISAASAALAVALLA) form a helical membrane-spanning segment. The Extracellular portion of the chain corresponds to 142 to 168 (RNGQDLQGTHYWPTVCNYVSKFCDYTQ). Residues 169-189 (GAIIASFVGFGLLFLSTLLAA) form a helical membrane-spanning segment. At 190-200 (SALYHLSHRRH) the chain is on the cytoplasmic side.

It belongs to the Casparian strip membrane proteins (CASP) family. In terms of assembly, homodimer and heterodimers.

The protein resides in the cell membrane. The polypeptide is CASP-like protein 1U2 (Physcomitrium patens (Spreading-leaved earth moss)).